Reading from the N-terminus, the 174-residue chain is Calcineurin subunit B (174 aa).

EF-hand domains lie at 21–56 (EEIE…SSNP), 60–88 (RLMD…FSGK), 90–125 (SKLD…MVGK), and 131–166 (ELQQ…KSVA). 20 residues coordinate Ca(2+): Asp34, Asp36, Ser38, Thr40, Glu45, Asp66, Asp68, Asn70, Thr72, Glu77, Asp103, Asp105, Asp107, Tyr109, Glu114, Asp144, Asp146, Asp148, Arg150, and Glu155.

Belongs to the calcineurin regulatory subunit family. Composed of a catalytic subunit (A) and a regulatory subunit (B).

Its function is as follows. Regulatory subunit of calcineurin, a calcium-dependent, calmodulin stimulated protein phosphatase. Confers calcium sensitivity. The polypeptide is Calcineurin subunit B (CNB1) (Debaryomyces hansenii (strain ATCC 36239 / CBS 767 / BCRC 21394 / JCM 1990 / NBRC 0083 / IGC 2968) (Yeast)).